We begin with the raw amino-acid sequence, 30 residues long: Hementerin (30 aa).

Ca(2+) is required as a cofactor.

The protein resides in the secreted. With respect to regulation, fibrino(geno)lytic activity inhibited by EDTA but not by PMSF, E-64, 6-AHA and aprotinin. Its function is as follows. Cleaves fibrinogen Aalpha (FGA), gamma (FGG) and Bbeta (FGB) chains. Degrades cross-linked fibrin. Has no amidolytic, plasminogenolytic or caseinolytic activity. Inhibits platelet aggregation induced by collagen (IC(50)=7.5ug/ml) and various other agonists, presumably via activation of a nitridergic pathway. Inhibition is accompanied by reduced ATP release from and surface expression of SELP and CD63 on platelets as well as increased intracellular levels of Ca(2+), cGMP and nitric oxide synthase activity. In Haementeria depressa (Leech), this protein is Hementerin.